A 20-amino-acid chain; its full sequence is GKPNKPRPAPIKPRPPHPRL.

Residues 1 to 13 (GKPNKPRPAPIKP) show a composition bias toward pro residues. The interval 1-20 (GKPNKPRPAPIKPRPPHPRL) is disordered.

It is found in the secreted. In terms of biological role, antimicrobial peptide active against many Gram-negative enterobacterial and plant-associated bacterial species. Not active against other bacterial species like H.pylori, P.mirabilis, B.pertussis or N.gonorrhoeae. This is Apidaecin 2+ from Pimpla disparis (Parasitic wasp).